The following is a 453-amino-acid chain: Secreted triacylglycerol lipase LIP2 (453 aa).

Residues 1–19 (MKLSLVVLTLISVAAQALA) form the signal peptide. N98 carries N-linked (GlcNAc...) asparagine glycosylation. C115 and C284 are joined by a disulfide. Catalysis depends on S197, which acts as the Nucleophile. An N-linked (GlcNAc...) asparagine glycan is attached at N230. Residues D344 and H378 contribute to the active site. An intrachain disulfide couples C360 to C406.

The protein belongs to the AB hydrolase superfamily. Lipase family. Class Lip subfamily.

It localises to the secreted. It carries out the reaction a triacylglycerol + H2O = a diacylglycerol + a fatty acid + H(+). The catalysed reaction is a monoacylglycerol + H2O = glycerol + a fatty acid + H(+). It catalyses the reaction a diacylglycerol + H2O = a monoacylglycerol + a fatty acid + H(+). The activity is significantly increased in the presence of Triton X-100 and partially inhibited by PMSF but unaffected by univalent and divalent metal ions. Activity is significantly decreased in acetate buffer compared to that in citrate buffer at the same pH. Functionally, major secreted lipase involved in Dandruff and seborrheic dermatitis (D/SD) probably via lipase-mediated breakdown of sebaceous lipids and release of irritating free fatty acids. Has triacylglycerol lipase activity and is able to hydrolyze triolein, tristearin, trilinolein, tripalmitoylglycerol and trihexadecenoin. Hydrolyze diacylglycerols such as distearin, dilinolein, dipalmitoylglycerol and dipalmitolein. Shows high esterase activity against 4-nitrophenyl palmitate and 1-naphthyl palmitate but not 1-naphthyl acetate, suggesting that it specifically recognizes fatty acids. Mostly converts monoolein to di- and triolein, while free fatty acids are only produced in low amounts. This is Secreted triacylglycerol lipase LIP2 from Malassezia globosa (strain ATCC MYA-4612 / CBS 7966) (Dandruff-associated fungus).